The following is an 82-amino-acid chain: Sec-independent protein translocase protein TatA (82 aa).

A helical membrane pass occupies residues 1 to 21; it reads MLGFGPFELILIVVIIALLFG. Basic and acidic residues predominate over residues 36–47; sequence IKEFKQEMHEPS. The interval 36 to 82 is disordered; sequence IKEFKQEMHEPSPPRPQVTDIPSQRLDPVTGAPVSTESTVPASDRRS.

Belongs to the TatA/E family. In terms of assembly, forms a complex with TatC.

The protein localises to the cell membrane. In terms of biological role, part of the twin-arginine translocation (Tat) system that transports large folded proteins containing a characteristic twin-arginine motif in their signal peptide across membranes. TatA could form the protein-conducting channel of the Tat system. The sequence is that of Sec-independent protein translocase protein TatA from Deinococcus deserti (strain DSM 17065 / CIP 109153 / LMG 22923 / VCD115).